The sequence spans 425 residues: Enolase (425 aa).

Q162 contributes to the (2R)-2-phosphoglycerate binding site. Catalysis depends on E204, which acts as the Proton donor. Mg(2+)-binding residues include D241, E282, and D309. Residues K334, R363, S364, and K385 each contribute to the (2R)-2-phosphoglycerate site. K334 serves as the catalytic Proton acceptor.

The protein belongs to the enolase family. Mg(2+) is required as a cofactor.

It is found in the cytoplasm. The protein localises to the secreted. The protein resides in the cell surface. It carries out the reaction (2R)-2-phosphoglycerate = phosphoenolpyruvate + H2O. The protein operates within carbohydrate degradation; glycolysis; pyruvate from D-glyceraldehyde 3-phosphate: step 4/5. Its function is as follows. Catalyzes the reversible conversion of 2-phosphoglycerate (2-PG) into phosphoenolpyruvate (PEP). It is essential for the degradation of carbohydrates via glycolysis. This chain is Enolase, found in Corynebacterium efficiens (strain DSM 44549 / YS-314 / AJ 12310 / JCM 11189 / NBRC 100395).